A 542-amino-acid chain; its full sequence is CTP synthase (542 aa).

The interval 1–266 (MATNYIFVTG…DDLICQRFRL (266 aa)) is amidoligase domain. Ser14 is a CTP binding site. UTP is bound at residue Ser14. ATP contacts are provided by residues 15-20 (SLGKGI) and Asp72. Mg(2+) is bound by residues Asp72 and Glu140. Residues 147–149 (DIE), 187–192 (KTKPTQ), and Lys223 each bind CTP. UTP is bound by residues 187–192 (KTKPTQ) and Lys223. Residue 239–241 (KDV) coordinates ATP. Residues 291–542 (TIGMVGKYVE…VKAAKENQKK (252 aa)) enclose the Glutamine amidotransferase type-1 domain. Gly352 lines the L-glutamine pocket. Cys379 functions as the Nucleophile; for glutamine hydrolysis in the catalytic mechanism. L-glutamine contacts are provided by residues 380 to 383 (LGMQ), Glu403, and Arg470. Residues His515 and Glu517 contribute to the active site.

It belongs to the CTP synthase family. Homotetramer.

It catalyses the reaction UTP + L-glutamine + ATP + H2O = CTP + L-glutamate + ADP + phosphate + 2 H(+). It carries out the reaction L-glutamine + H2O = L-glutamate + NH4(+). The catalysed reaction is UTP + NH4(+) + ATP = CTP + ADP + phosphate + 2 H(+). Its pathway is pyrimidine metabolism; CTP biosynthesis via de novo pathway; CTP from UDP: step 2/2. Allosterically activated by GTP, when glutamine is the substrate; GTP has no effect on the reaction when ammonia is the substrate. The allosteric effector GTP functions by stabilizing the protein conformation that binds the tetrahedral intermediate(s) formed during glutamine hydrolysis. Inhibited by the product CTP, via allosteric rather than competitive inhibition. Catalyzes the ATP-dependent amination of UTP to CTP with either L-glutamine or ammonia as the source of nitrogen. Regulates intracellular CTP levels through interactions with the four ribonucleotide triphosphates. This is CTP synthase from Mannheimia succiniciproducens (strain KCTC 0769BP / MBEL55E).